Here is a 142-residue protein sequence, read N- to C-terminus: MTLTDSDKAAIVALWGKIAPQASAIGAEALERLFLSYPQTKTYFSHFDVSHGSADLSNHGGKVVNALGEAAKHIDDLDSALSTLSDLHAYNLRIDPGNFKLLSHTIQVTLAIHFHKEFDAATQAAWDKFLAEVATVLTSKYR.

In terms of domain architecture, Globin spans 2 to 142 (TLTDSDKAAI…VATVLTSKYR (141 aa)). His59 is an O2 binding site. His88 contributes to the heme b binding site.

The protein belongs to the globin family. In terms of assembly, heterotetramer of two alpha chains and two beta chains. In terms of tissue distribution, red blood cells.

Functionally, this is a larval (tadpole) alpha-globin. The protein is Hemoglobin subunit alpha-4 (hba4) of Xenopus laevis (African clawed frog).